A 24-amino-acid polypeptide reads, in one-letter code: 47 kDa cell wall protein (24 aa).

It is found in the secreted. Its subcellular location is the cell wall. The polypeptide is 47 kDa cell wall protein (Nicotiana tabacum (Common tobacco)).